Here is a 202-residue protein sequence, read N- to C-terminus: 3-isopropylmalate dehydratase small subunit (202 aa).

It belongs to the LeuD family. LeuD type 1 subfamily. As to quaternary structure, heterodimer of LeuC and LeuD.

It catalyses the reaction (2R,3S)-3-isopropylmalate = (2S)-2-isopropylmalate. The protein operates within amino-acid biosynthesis; L-leucine biosynthesis; L-leucine from 3-methyl-2-oxobutanoate: step 2/4. Functionally, catalyzes the isomerization between 2-isopropylmalate and 3-isopropylmalate, via the formation of 2-isopropylmaleate. The chain is 3-isopropylmalate dehydratase small subunit from Caulobacter vibrioides (strain ATCC 19089 / CIP 103742 / CB 15) (Caulobacter crescentus).